We begin with the raw amino-acid sequence, 340 residues long: Spike protein P5 (340 aa).

The segment at 2-122 (ANQQIGGSTV…NFPIALGVWP (121 aa)) is domain-1. The Collagen-like domain occupies 123 to 141 (SGIKGDKGDPGAPGPAGGT). Positions 142–340 (VVVEDSGASF…IINITAAKIN (199 aa)) are domain-2.

Homotrimer.

It is found in the virion. Functionally, in association with P31 and P2, forms the spike complexes located at the 5-fold vertices of the capsid. Essential for viral infectivity. The protein is Spike protein P5 (V) of Enterobacteria phage PRD1 (Bacteriophage PRD1).